The primary structure comprises 154 residues: Transcriptional repressor NrdR (154 aa).

A zinc finger lies at 3 to 34 (CPYCRHPDSRVVDSREADDGQLIRRRRSCPEC). Residues 46–136 (LAVVKRSGVT…VYRSFESLAD (91 aa)) form the ATP-cone domain.

Belongs to the NrdR family. Zn(2+) is required as a cofactor.

Functionally, negatively regulates transcription of bacterial ribonucleotide reductase nrd genes and operons by binding to NrdR-boxes. The protein is Transcriptional repressor NrdR of Salinispora tropica (strain ATCC BAA-916 / DSM 44818 / JCM 13857 / NBRC 105044 / CNB-440).